Consider the following 245-residue polypeptide: D-aminoacyl-tRNA deacylase (245 aa).

It belongs to the DtdA deacylase family. As to quaternary structure, monomer. Requires Zn(2+) as cofactor.

The catalysed reaction is a D-aminoacyl-tRNA + H2O = a tRNA + a D-alpha-amino acid + H(+). The enzyme catalyses glycyl-tRNA(Ala) + H2O = tRNA(Ala) + glycine + H(+). Functionally, D-aminoacyl-tRNA deacylase with broad substrate specificity. By recycling D-aminoacyl-tRNA to D-amino acids and free tRNA molecules, this enzyme counteracts the toxicity associated with the formation of D-aminoacyl-tRNA entities in vivo. This Ignicoccus hospitalis (strain KIN4/I / DSM 18386 / JCM 14125) protein is D-aminoacyl-tRNA deacylase.